Here is a 463-residue protein sequence, read N- to C-terminus: tRNA (guanine(37)-N(1))-methyltransferase (463 aa).

Residues His207, 245-246, 274-275, and Asn305 contribute to the S-adenosyl-L-methionine site; these read DL and DG.

The protein belongs to the class I-like SAM-binding methyltransferase superfamily. TRM5/TYW2 family. As to quaternary structure, monomer.

The protein localises to the mitochondrion matrix. Its subcellular location is the nucleus. The protein resides in the cytoplasm. The catalysed reaction is guanosine(37) in tRNA + S-adenosyl-L-methionine = N(1)-methylguanosine(37) in tRNA + S-adenosyl-L-homocysteine + H(+). Functionally, specifically methylates the N1 position of guanosine-37 in various cytoplasmic and mitochondrial tRNAs. Methylation is not dependent on the nature of the nucleoside 5' of the target nucleoside. This is the first step in the biosynthesis of wybutosine (yW), a modified base adjacent to the anticodon of tRNAs and required for accurate decoding. The polypeptide is tRNA (guanine(37)-N(1))-methyltransferase (Pediculus humanus subsp. corporis (Body louse)).